Reading from the N-terminus, the 362-residue chain is Chorismate synthase (362 aa).

Position 46 (R46) interacts with NADP(+). Residues 122-124, 238-239, G278, 293-297, and R319 contribute to the FMN site; these read RSS, NA, and KPTPS.

The protein belongs to the chorismate synthase family. As to quaternary structure, homotetramer. Requires FMNH2 as cofactor.

The catalysed reaction is 5-O-(1-carboxyvinyl)-3-phosphoshikimate = chorismate + phosphate. The protein operates within metabolic intermediate biosynthesis; chorismate biosynthesis; chorismate from D-erythrose 4-phosphate and phosphoenolpyruvate: step 7/7. Catalyzes the anti-1,4-elimination of the C-3 phosphate and the C-6 proR hydrogen from 5-enolpyruvylshikimate-3-phosphate (EPSP) to yield chorismate, which is the branch point compound that serves as the starting substrate for the three terminal pathways of aromatic amino acid biosynthesis. This reaction introduces a second double bond into the aromatic ring system. The polypeptide is Chorismate synthase (Campylobacter jejuni subsp. jejuni serotype O:2 (strain ATCC 700819 / NCTC 11168)).